The primary structure comprises 147 residues: uncharacterized protein (147 aa).

Residues 30–102 are disordered; the sequence is GRCEQVALSS…TPPTRPESIF (73 aa). The segment covering 62 to 71 has biased composition (polar residues); it reads RPSTGETFVQ.

This is an uncharacterized protein from Homo sapiens (Human).